Consider the following 250-residue polypeptide: Acetylglutamate kinase (250 aa).

Substrate contacts are provided by residues 41–42, Arg-63, and Asn-156; that span reads GG.

This sequence belongs to the acetylglutamate kinase family. ArgB subfamily.

The protein resides in the cytoplasm. The catalysed reaction is N-acetyl-L-glutamate + ATP = N-acetyl-L-glutamyl 5-phosphate + ADP. Its pathway is amino-acid biosynthesis; L-arginine biosynthesis; N(2)-acetyl-L-ornithine from L-glutamate: step 2/4. Catalyzes the ATP-dependent phosphorylation of N-acetyl-L-glutamate. This is Acetylglutamate kinase from Listeria monocytogenes serovar 1/2a (strain ATCC BAA-679 / EGD-e).